The sequence spans 332 residues: uncharacterized protein (332 aa).

This is an uncharacterized protein from Schizosaccharomyces pombe (strain 972 / ATCC 24843) (Fission yeast).